A 121-amino-acid chain; its full sequence is Alpha-lactalbumin (121 aa).

The C-type lysozyme domain maps to 1 to 121; it reads IDYRKCQASQ…CLEDLDQWRC (121 aa). Intrachain disulfides connect Cys-6–Cys-121, Cys-28–Cys-112, Cys-61–Cys-77, and Cys-73–Cys-91. A glycan (N-linked (GlcNAc...) asparagine) is linked at Asn-44. Ca(2+) is bound by residues Lys-79, Asp-82, Asp-84, Asp-87, and Asp-88.

It belongs to the glycosyl hydrolase 22 family. Lactose synthase (LS) is a heterodimer of a catalytic component, beta1,4-galactosyltransferase (beta4Gal-T1) and a regulatory component, alpha-lactalbumin (LA). As to expression, mammary gland specific. Secreted in milk.

It localises to the secreted. In terms of biological role, regulatory subunit of lactose synthase, changes the substrate specificity of galactosyltransferase in the mammary gland making glucose a good acceptor substrate for this enzyme. This enables LS to synthesize lactose, the major carbohydrate component of milk. In other tissues, galactosyltransferase transfers galactose onto the N-acetylglucosamine of the oligosaccharide chains in glycoproteins. This is Alpha-lactalbumin (LALBA) from Notamacropus rufogriseus (Red-necked wallaby).